The chain runs to 112 residues: Putative pterin-4-alpha-carbinolamine dehydratase (112 aa).

This sequence belongs to the pterin-4-alpha-carbinolamine dehydratase family.

The enzyme catalyses (4aS,6R)-4a-hydroxy-L-erythro-5,6,7,8-tetrahydrobiopterin = (6R)-L-erythro-6,7-dihydrobiopterin + H2O. This Shewanella sp. (strain MR-4) protein is Putative pterin-4-alpha-carbinolamine dehydratase.